The sequence spans 88 residues: Chaplin-F (88 aa).

An N-terminal signal peptide occupies residues 1 to 36 (MYNPKEHFSMSRIAKGLALTSVAAAAVAGTAGVAAA). The Chaplin domain occupies 47–87 (SPGVLSGNVVQVPVHIPVNVCGNTIDVIGLLNPAFGNECEN). Cys67 and Cys85 are disulfide-bonded.

Belongs to the chaplin family. Short chaplin subfamily. Homodimer; disulfide linked. About 20% of ChpF isolated from cell wall forms disulfide-bonded homodimers.

The protein localises to the cell surface. The protein resides in the secreted. Its subcellular location is the cell wall. It is found in the fimbrium. Its function is as follows. One of 8 partially redundant surface-active proteins required for efficient formation of aerial mycelium; the short chaplins assemble into a hydrophobic, amyloidal fibrillar surface layer that envelopes and protects aerial hyphae and spores, presumably anchored to the long chaplins. Chaplins have an overlapping function with the surface-active SapB peptide; chaplins are essential on minimal medium while on rich medium both chaplins and SapB are required for efficient aerial hyphae formation. Chaplins are also involved in cell attachment to a hydrophobic surface. Forms amyloid fibrils in vitro probably composed of stacked beta-sheets, at low extracellular concentrations individually restores the ability to form aerial hyphae to a chaplin-deficient strain. A small chaplin extract (ChpD, ChpE, ChpF, ChpG and ChpH) self-assembles into 2 different amyloids; small fibrils at the air-water interface form an amphipathic membrane that resembles spore-surface structures involved in aerial hyphae formation, and hydrophilic fibrils in solution that resemble the fibers that attach cells to a hydrophobic surface. At the air-water interface the hydrophilic surface is in contact with water (probably equivalent to the peptidoglycan layer), while the hydrophobic face is exposed to the air, making the surface of the aerial hyphae hydrophobic. A small chaplin extract applied to a chaplin-deficient strain restores aerial hyphae formation. The small chaplin extract forms an amyloid-like structure similar to that seen on the surface of cells without rodlets (rdlA-rdlB deletions), and is highly surface active, reducing surface tension from 72 to 26 mJ/m(2), which probably allows escape of hyphae from an aqueous environment into air. ChpF alone is less surface active at pH 3.0 than at pH 10.0, it reduces the surface tension of water from 72.8 mN/m to 50 mN/m at pH 3.0 or to 37 mN/m at pH 10.0. ChpF and ChpG are sufficient to restore the rodlet layer and hydrophobicity to a strain deleted for the other 6 chaplin genes. The chain is Chaplin-F from Streptomyces coelicolor (strain ATCC BAA-471 / A3(2) / M145).